The chain runs to 336 residues: MLNMVQSNPKGVEKTASKSEQDAWTLASARLLYDLPFNDLLFEAQNVHRANFDPNRVQLSKLLNIKTGGCPEDCGYCSQSAHHASGLKASKLMSLDTVLEEAQKAKDSGATRYCMGAAWRSPKPRDEPAIAEMVKQVKALGLETCMTLGMLSPDQAQTFAEAGLDYYNHNIDTSERFYPQVITTRSFDDRLETLAHVREAGIKVCSGGILGLGETEDDRIDMLVTLANLPTPPESVPINMLIPMPGSRLEKASPVDPIAFVRIIALARLMMPQSHVRLTAGRNSMSDEMQALCFFAGANSIFIGDTLLTAANPGEDRDTSLMRRLGLTADTLDNHA.

The 228-residue stretch at 55–282 (NRVQLSKLLN…QSHVRLTAGR (228 aa)) folds into the Radical SAM core domain. [4Fe-4S] cluster contacts are provided by cysteine 70, cysteine 74, and cysteine 77. Residues cysteine 114, cysteine 145, cysteine 205, and arginine 277 each coordinate [2Fe-2S] cluster.

The protein belongs to the radical SAM superfamily. Biotin synthase family. Homodimer. [4Fe-4S] cluster is required as a cofactor. The cofactor is [2Fe-2S] cluster.

The catalysed reaction is (4R,5S)-dethiobiotin + (sulfur carrier)-SH + 2 reduced [2Fe-2S]-[ferredoxin] + 2 S-adenosyl-L-methionine = (sulfur carrier)-H + biotin + 2 5'-deoxyadenosine + 2 L-methionine + 2 oxidized [2Fe-2S]-[ferredoxin]. It participates in cofactor biosynthesis; biotin biosynthesis; biotin from 7,8-diaminononanoate: step 2/2. Functionally, catalyzes the conversion of dethiobiotin (DTB) to biotin by the insertion of a sulfur atom into dethiobiotin via a radical-based mechanism. This Brucella anthropi (strain ATCC 49188 / DSM 6882 / CCUG 24695 / JCM 21032 / LMG 3331 / NBRC 15819 / NCTC 12168 / Alc 37) (Ochrobactrum anthropi) protein is Biotin synthase.